The following is a 99-amino-acid chain: MISQERLLKVILAPHISEKSTVCAENDNTVVFRVAIDATKAEVKAAVAQLFEVEVDSVRTLVNKGKTKRTGARMGRRVDWKKAYVTLADGAEIDFVGAE.

It belongs to the universal ribosomal protein uL23 family. In terms of assembly, part of the 50S ribosomal subunit. Contacts protein L29, and trigger factor when it is bound to the ribosome.

In terms of biological role, one of the early assembly proteins it binds 23S rRNA. One of the proteins that surrounds the polypeptide exit tunnel on the outside of the ribosome. Forms the main docking site for trigger factor binding to the ribosome. The polypeptide is Large ribosomal subunit protein uL23 (Shewanella sediminis (strain HAW-EB3)).